Reading from the N-terminus, the 398-residue chain is S-adenosylmethionine synthase (398 aa).

The disordered stretch occupies residues 1–21 (MAANRRLFTSESVTEGHPDKM). H17 contacts ATP. D19 contributes to the Mg(2+) binding site. Residue E45 participates in K(+) binding. E58 and Q101 together coordinate L-methionine. Residues 101–111 (QSADIAGGVNQ) are flexible loop. ATP-binding positions include 177–179 (DGK), 244–245 (RF), D253, 259–260 (RK), A276, and K280. Residue D253 participates in L-methionine binding. K284 is an L-methionine binding site.

Belongs to the AdoMet synthase family. In terms of assembly, homotetramer; dimer of dimers. Requires Mg(2+) as cofactor. The cofactor is K(+).

It localises to the cytoplasm. It carries out the reaction L-methionine + ATP + H2O = S-adenosyl-L-methionine + phosphate + diphosphate. It functions in the pathway amino-acid biosynthesis; S-adenosyl-L-methionine biosynthesis; S-adenosyl-L-methionine from L-methionine: step 1/1. Functionally, catalyzes the formation of S-adenosylmethionine (AdoMet) from methionine and ATP. The overall synthetic reaction is composed of two sequential steps, AdoMet formation and the subsequent tripolyphosphate hydrolysis which occurs prior to release of AdoMet from the enzyme. This is S-adenosylmethionine synthase from Oceanobacillus iheyensis (strain DSM 14371 / CIP 107618 / JCM 11309 / KCTC 3954 / HTE831).